Reading from the N-terminus, the 86-residue chain is Large ribosomal subunit protein bL31B (86 aa).

Belongs to the bacterial ribosomal protein bL31 family. Type B subfamily. As to quaternary structure, part of the 50S ribosomal subunit.

The protein is Large ribosomal subunit protein bL31B of Yersinia pseudotuberculosis serotype O:1b (strain IP 31758).